The following is a 380-amino-acid chain: Cell division protein FtsZ 2 (380 aa).

Residues 47-51, 134-136, Glu-165, Arg-168, and Asp-211 contribute to the GTP site; these read GAGNN and GTG.

Belongs to the FtsZ family. In terms of assembly, homodimer. Polymerizes to form a dynamic ring structure in a strictly GTP-dependent manner. Interacts directly with several other division proteins.

Its subcellular location is the cytoplasm. Essential cell division protein that forms a contractile ring structure (Z ring) at the future cell division site. The regulation of the ring assembly controls the timing and the location of cell division. One of the functions of the FtsZ ring is to recruit other cell division proteins to the septum to produce a new cell wall between the dividing cells. Binds GTP and shows GTPase activity. The chain is Cell division protein FtsZ 2 from Methanocaldococcus jannaschii (strain ATCC 43067 / DSM 2661 / JAL-1 / JCM 10045 / NBRC 100440) (Methanococcus jannaschii).